Here is a 343-residue protein sequence, read N- to C-terminus: Heat-inducible transcription repressor HrcA (343 aa).

It belongs to the HrcA family.

Functionally, negative regulator of class I heat shock genes (grpE-dnaK-dnaJ and groELS operons). Prevents heat-shock induction of these operons. The chain is Heat-inducible transcription repressor HrcA from Bacillus licheniformis (strain ATCC 14580 / DSM 13 / JCM 2505 / CCUG 7422 / NBRC 12200 / NCIMB 9375 / NCTC 10341 / NRRL NRS-1264 / Gibson 46).